The following is a 407-amino-acid chain: Phosphonoacetate hydrolase (407 aa).

Zn(2+)-binding residues include Asp-25, Thr-64, Asp-202, His-206, Asp-241, His-242, and His-368. Residues Thr-64 and Asp-202 each contribute to the substrate site. Positions 242 and 368 each coordinate substrate.

Belongs to the alkaline phosphatase family. PhnA subfamily. In terms of assembly, homodimer. Zn(2+) serves as cofactor.

It carries out the reaction phosphonoacetate + H2O = acetate + phosphate + H(+). Its activity is regulated as follows. Completely inhibited by EDTA and 1,10-phenanthroline. Moderately inhibited by the phosphonocarboxylic acids phosphonoformate and 3-phosphonopropionate and the phosphonate herbicide glyphosate. Partially inhibited by the reducing agents sodium sulfide and dithiotheitol and the chelating agent iminodiacetate. Nonphosphonate analogs of phosphonoacetate, such as arsonoacetate, sulfonoacetate and malonate are poor inhibitors. Inorganic phosphate, acetate and the known phosphonotase inhibitor phosphite have little effect on activity. Not inhibited by the alkylphosphonic acids methylphosphonate and ethylphosphonate, or the aminoalkylphosphonates 2-aminoethylphosphonate, 3-aminopropylphosphonate and 4-aminobutylphosphonate. Fe(3+), Ca(2+), Mg(2+) and Cs(+) have no effect on activity. Activity is slightly increased by the aminoalkylphosphonates 1-aminoethylphosphonate, 1-aminobutylphosphonate, 2-amino-4-butylphosphonate. Activity is increased by Zn(2+), Mn(2+) and Co(2+), these 3 metal ions also allow recovery of activity after EDTA treatment. Specifically hydrolyzes phosphonoacetate. Does not have activity on other organophosphonates or acetates. This is Phosphonoacetate hydrolase from Pseudomonas fluorescens.